A 254-amino-acid chain; its full sequence is Alcohol dehydrogenase (254 aa).

Residue 10-33 participates in NAD(+) binding; that stretch reads FVAGLGGIGLDTSREIVKSGPKNL. Residue serine 138 coordinates substrate. The active-site Proton acceptor is the tyrosine 151.

It belongs to the short-chain dehydrogenases/reductases (SDR) family. As to quaternary structure, homodimer.

The enzyme catalyses a primary alcohol + NAD(+) = an aldehyde + NADH + H(+). It catalyses the reaction a secondary alcohol + NAD(+) = a ketone + NADH + H(+). The sequence is that of Alcohol dehydrogenase (Adh) from Drosophila differens (Fruit fly).